Here is a 258-residue protein sequence, read N- to C-terminus: Sec-independent protein translocase protein TatC (258 aa).

Residues 2-23 (SVEDTQPLITHLIELRKRLLNC) lie on the Cytoplasmic side of the membrane. A helical membrane pass occupies residues 24–44 (IIAVIVIFLCLVYFANDIYHL). The Periplasmic segment spans residues 45–75 (VSAPLIKQLPQGSTMIATDVASPFFTPIKLT). The chain crosses the membrane as a helical span at residues 76 to 96 (FMVSLILSAPVILYQVWAFIA). At 97-115 (PALYKHERRLVVPLLVSSS) the chain is on the cytoplasmic side. The helical transmembrane segment at 116-136 (LLFYIGMAFAYFVVFPLAFGF) threads the bilayer. The Periplasmic segment spans residues 137-156 (LANTAPEGVQVSTDIASYLS). Residues 157-177 (FVMALFMAFGVSFEVPVAIVL) form a helical membrane-spanning segment. Topologically, residues 178-192 (LCWMGITSPEDLRKK) are cytoplasmic. The helical transmembrane segment at 193–210 (RPYVLVGAFVVGMLLTPP) threads the bilayer. A topological domain (periplasmic) is located at residue aspartate 211. The helical transmembrane segment at 212–232 (VFSQTLLAIPMYCLFEIGVFF) threads the bilayer. At 233-258 (SRFYVGKGRNREEENDAEAESEKTEE) the chain is on the cytoplasmic side.

This sequence belongs to the TatC family. The Tat system comprises two distinct complexes: a TatABC complex, containing multiple copies of TatA, TatB and TatC subunits, and a separate TatA complex, containing only TatA subunits. Substrates initially bind to the TatABC complex, which probably triggers association of the separate TatA complex to form the active translocon. TatC can form a distinct, stable, multimeric complex independent of TatA and TatB. Each of TatA, TatB and TatC are able to interact in pairs without the third partner. Interacts with the signal sequence of DmsA and DmsD.

The protein resides in the cell inner membrane. Functionally, part of the twin-arginine translocation (Tat) system that transports large folded proteins containing a characteristic twin-arginine motif in their signal peptide across membranes. Together with TatB, TatC is part of a receptor directly interacting with Tat signal peptides. This chain is Sec-independent protein translocase protein TatC, found in Escherichia coli (strain K12).